Here is a 204-residue protein sequence, read N- to C-terminus: dITP/XTP pyrophosphatase (204 aa).

Substrate is bound at residue 8-13 (SRNRKK). D73 (proton acceptor) is an active-site residue. D73 contributes to the Mg(2+) binding site. Substrate is bound by residues S74, 155–158 (FGYD), K179, and 184–185 (HR).

It belongs to the HAM1 NTPase family. Homodimer. The cofactor is Mg(2+).

The enzyme catalyses XTP + H2O = XMP + diphosphate + H(+). The catalysed reaction is dITP + H2O = dIMP + diphosphate + H(+). It catalyses the reaction ITP + H2O = IMP + diphosphate + H(+). In terms of biological role, pyrophosphatase that catalyzes the hydrolysis of nucleoside triphosphates to their monophosphate derivatives, with a high preference for the non-canonical purine nucleotides XTP (xanthosine triphosphate), dITP (deoxyinosine triphosphate) and ITP. Seems to function as a house-cleaning enzyme that removes non-canonical purine nucleotides from the nucleotide pool, thus preventing their incorporation into DNA/RNA and avoiding chromosomal lesions. This Mycolicibacterium paratuberculosis (strain ATCC BAA-968 / K-10) (Mycobacterium paratuberculosis) protein is dITP/XTP pyrophosphatase.